Here is a 243-residue protein sequence, read N- to C-terminus: MRTIRLDIEYDGTDFAGWQRQSGTIPTVQGTIEKLLSQITQEEVLLNGAGRTDKGVHARQQVASCALHSSMELSRLAHSLNCLLPPTIRICNAVHVTDDFHARFSATERTYRYFVSETPSALCNRFTGCANALLDVGVMQQMAAMVVGEHDFTAFSREERDSPAKRCKVTSCRWHRLHGMVVLQISANRFLRSMVRYLVHAMLQGGKGRLAPTLFQDMVESGTSSYRMVAAPASGLFLWRIGY.

The Nucleophile role is filled by Asp53. Tyr111 serves as a coordination point for substrate.

The protein belongs to the tRNA pseudouridine synthase TruA family. Homodimer.

The catalysed reaction is uridine(38/39/40) in tRNA = pseudouridine(38/39/40) in tRNA. Formation of pseudouridine at positions 38, 39 and 40 in the anticodon stem and loop of transfer RNAs. This is tRNA pseudouridine synthase A from Chlorobium chlorochromatii (strain CaD3).